Consider the following 60-residue polypeptide: Large ribosomal subunit protein uL30 (60 aa).

Belongs to the universal ribosomal protein uL30 family. As to quaternary structure, part of the 50S ribosomal subunit.

The chain is Large ribosomal subunit protein uL30 from Kineococcus radiotolerans (strain ATCC BAA-149 / DSM 14245 / SRS30216).